A 320-amino-acid polypeptide reads, in one-letter code: ATP phosphoribosyltransferase (320 aa).

It belongs to the ATP phosphoribosyltransferase family. Long subfamily. It depends on Mg(2+) as a cofactor.

It localises to the cytoplasm. The catalysed reaction is 1-(5-phospho-beta-D-ribosyl)-ATP + diphosphate = 5-phospho-alpha-D-ribose 1-diphosphate + ATP. It participates in amino-acid biosynthesis; L-histidine biosynthesis; L-histidine from 5-phospho-alpha-D-ribose 1-diphosphate: step 1/9. Its activity is regulated as follows. Feedback inhibited by histidine. Catalyzes the condensation of ATP and 5-phosphoribose 1-diphosphate to form N'-(5'-phosphoribosyl)-ATP (PR-ATP). Has a crucial role in the pathway because the rate of histidine biosynthesis seems to be controlled primarily by regulation of HisG enzymatic activity. This is ATP phosphoribosyltransferase (hisG) from Caulobacter vibrioides (strain ATCC 19089 / CIP 103742 / CB 15) (Caulobacter crescentus).